The following is a 722-amino-acid chain: Polyribonucleotide nucleotidyltransferase (722 aa).

Residues Asp495 and Asp501 each contribute to the Mg(2+) site. The 60-residue stretch at 562–621 (PRLLSFRIDPELIGTVIGPGGRTIKGITERTNTKIDIEDGGIVTIASHDGAAAEEAQRII) folds into the KH domain. Residues 631–699 (GEIFPGSITR…NRGRINLTLR (69 aa)) enclose the S1 motif domain. The tract at residues 700–722 (GVSQNGGMSNYPEPTPTPVAPLT) is disordered. Residues 712–722 (EPTPTPVAPLT) are compositionally biased toward pro residues.

Belongs to the polyribonucleotide nucleotidyltransferase family. Requires Mg(2+) as cofactor.

Its subcellular location is the cytoplasm. The catalysed reaction is RNA(n+1) + phosphate = RNA(n) + a ribonucleoside 5'-diphosphate. Functionally, involved in mRNA degradation. Catalyzes the phosphorolysis of single-stranded polyribonucleotides processively in the 3'- to 5'-direction. The polypeptide is Polyribonucleotide nucleotidyltransferase (Prochlorococcus marinus (strain NATL2A)).